Consider the following 459-residue polypeptide: ATP synthase subunit beta 1 (459 aa).

148–155 (GGAGVGKT) provides a ligand contact to ATP.

The protein belongs to the ATPase alpha/beta chains family. As to quaternary structure, F-type ATPases have 2 components, CF(1) - the catalytic core - and CF(0) - the membrane proton channel. CF(1) has five subunits: alpha(3), beta(3), gamma(1), delta(1), epsilon(1). CF(0) has three main subunits: a(1), b(2) and c(9-12). The alpha and beta chains form an alternating ring which encloses part of the gamma chain. CF(1) is attached to CF(0) by a central stalk formed by the gamma and epsilon chains, while a peripheral stalk is formed by the delta and b chains.

The protein localises to the cell inner membrane. The catalysed reaction is ATP + H2O + 4 H(+)(in) = ADP + phosphate + 5 H(+)(out). Produces ATP from ADP in the presence of a proton gradient across the membrane. The catalytic sites are hosted primarily by the beta subunits. The protein is ATP synthase subunit beta 1 of Nitrosospira multiformis (strain ATCC 25196 / NCIMB 11849 / C 71).